The following is a 380-amino-acid chain: Mitogen-activated protein kinase mpkC (380 aa).

In terms of domain architecture, Protein kinase spans 20-300; sequence YVNLQPIGMG…AQDALRHPYL (281 aa). ATP contacts are provided by residues 26–34 and K49; that span reads IGMGSFGLV. Catalysis depends on D141, which acts as the Proton acceptor. T171 is subject to Phosphothreonine. The TXY motif lies at 171-173; the sequence is TGY. Y173 is subject to Phosphotyrosine.

The protein belongs to the protein kinase superfamily. Ser/Thr protein kinase family. MAP kinase subfamily. HOG1 sub-subfamily. It depends on Mg(2+) as a cofactor. Dually phosphorylated on Thr-171 and Tyr-173, which activates the enzyme.

It catalyses the reaction L-seryl-[protein] + ATP = O-phospho-L-seryl-[protein] + ADP + H(+). The catalysed reaction is L-threonyl-[protein] + ATP = O-phospho-L-threonyl-[protein] + ADP + H(+). Its activity is regulated as follows. Activated by tyrosine and threonine phosphorylation. Its function is as follows. Mitogen-activated protein kinase required for growth on media where sorbitol or mannitol is the sole carbon source. This chain is Mitogen-activated protein kinase mpkC (mpkC), found in Aspergillus clavatus (strain ATCC 1007 / CBS 513.65 / DSM 816 / NCTC 3887 / NRRL 1 / QM 1276 / 107).